We begin with the raw amino-acid sequence, 206 residues long: Ribosomal RNA large subunit methyltransferase E (206 aa).

S-adenosyl-L-methionine-binding residues include Gly-61, Trp-63, Asp-81, Asp-97, and Asp-122. Lys-162 (proton acceptor) is an active-site residue.

This sequence belongs to the class I-like SAM-binding methyltransferase superfamily. RNA methyltransferase RlmE family.

It is found in the cytoplasm. The enzyme catalyses uridine(2552) in 23S rRNA + S-adenosyl-L-methionine = 2'-O-methyluridine(2552) in 23S rRNA + S-adenosyl-L-homocysteine + H(+). Functionally, specifically methylates the uridine in position 2552 of 23S rRNA at the 2'-O position of the ribose in the fully assembled 50S ribosomal subunit. The sequence is that of Ribosomal RNA large subunit methyltransferase E from Neisseria meningitidis serogroup C / serotype 2a (strain ATCC 700532 / DSM 15464 / FAM18).